Reading from the N-terminus, the 574-residue chain is Peptidyl-prolyl cis-trans isomerase FKBP9 (574 aa).

A signal peptide spans methionine 1–alanine 26. 4 PPIase FKBP-type domains span residues glycine 58–tryptophan 146, serine 170–histidine 258, glycine 282–histidine 369, and glycine 393–valine 481. Asparagine 178, asparagine 290, asparagine 306, and asparagine 401 each carry an N-linked (GlcNAc...) asparagine glycan. EF-hand domains lie at tryptophan 492–serine 527 and aspartate 537–aspartate 572. Ca(2+)-binding residues include aspartate 505, aspartate 507, aspartate 509, glutamate 511, glutamate 516, aspartate 550, asparagine 552, aspartate 554, lysine 556, and glutamate 561. A Prevents secretion from ER motif is present at residues histidine 571–leucine 574.

In terms of processing, phosphorylated.

The protein localises to the endoplasmic reticulum. It carries out the reaction [protein]-peptidylproline (omega=180) = [protein]-peptidylproline (omega=0). With respect to regulation, inhibited by FK506. PPIases accelerate the folding of proteins during protein synthesis. This Bos taurus (Bovine) protein is Peptidyl-prolyl cis-trans isomerase FKBP9 (FKBP9).